The chain runs to 614 residues: Major facilitator superfamily domain-containing protein 6-like protein B (614 aa).

2 helical membrane passes run 41-61 and 78-98; these read LGLGASLVGIIIGFKHAVHLL and FFIMASLLLSAGAGGLFAFYP. The span at 177–191 shows a compositional bias: polar residues; that stretch reads HQRFTDQFPSSSPLT. Residues 177 to 243 are disordered; it reads HQRFTDQFPS…PFATHPNVSH (67 aa). Residues 205–227 show a composition bias toward low complexity; it reads GSGKAQKANSSKSSASNSKQRSS. The next 9 helical transmembrane spans lie at 270–290, 312–332, 345–365, 393–413, 425–445, 457–477, 480–500, 520–540, and 546–566; these read IFLIVLAMVIIWEILAAPLEW, LWIWGYLGASMGSIFITFLID, VSFHFFCYGGFLISTFFLSTL, IVLTALTVFVLGAVGSTIQNF, ELYMGLSIAAGLLSELALYFF, WMVVLGLLSLGIQFLYYSFLW, WSVVAIQILNAFSSGVIWWAI, LRWLAYGCGSSAGSFASGFII, and AVLYQACCITLLTWIVIFLLV.

Belongs to the major facilitator superfamily. MFSD6 family.

It localises to the membrane. In Xenopus laevis (African clawed frog), this protein is Major facilitator superfamily domain-containing protein 6-like protein B (mfsd6l-b).